Here is a 385-residue protein sequence, read N- to C-terminus: 1-deoxy-D-xylulose 5-phosphate reductoisomerase (385 aa).

Positions 10, 11, 12, 13, 36, 38, and 122 each coordinate NADPH. 1-deoxy-D-xylulose 5-phosphate is bound at residue Lys123. Glu124 contacts NADPH. Asp148 lines the Mn(2+) pocket. 4 residues coordinate 1-deoxy-D-xylulose 5-phosphate: Ser149, Glu150, Ser174, and His197. Glu150 is a binding site for Mn(2+). Gly203 is an NADPH binding site. 1-deoxy-D-xylulose 5-phosphate is bound by residues Ser210, Asn215, Lys216, and Glu219. Position 219 (Glu219) interacts with Mn(2+).

This sequence belongs to the DXR family. It depends on Mg(2+) as a cofactor. Mn(2+) is required as a cofactor.

The enzyme catalyses 2-C-methyl-D-erythritol 4-phosphate + NADP(+) = 1-deoxy-D-xylulose 5-phosphate + NADPH + H(+). It functions in the pathway isoprenoid biosynthesis; isopentenyl diphosphate biosynthesis via DXP pathway; isopentenyl diphosphate from 1-deoxy-D-xylulose 5-phosphate: step 1/6. Catalyzes the NADPH-dependent rearrangement and reduction of 1-deoxy-D-xylulose-5-phosphate (DXP) to 2-C-methyl-D-erythritol 4-phosphate (MEP). This is 1-deoxy-D-xylulose 5-phosphate reductoisomerase from Citrifermentans bemidjiense (strain ATCC BAA-1014 / DSM 16622 / JCM 12645 / Bem) (Geobacter bemidjiensis).